A 438-amino-acid polypeptide reads, in one-letter code: Innexin inx7 (438 aa).

The Cytoplasmic segment spans residues 1-23 (MLNTFSSVRQYLKFDLTRVVIDN). Residues 24–44 (IVFKLHYRWTFVILLVATLLI) traverse the membrane as a helical segment. The Extracellular portion of the chain corresponds to 45 to 58 (TSRQYIGEHIQCLS). A helical transmembrane segment spans residues 59 to 79 (DGVVSPVINTFCFFTPTFTVV). Topologically, residues 80–112 (RDQNQTAYRPGSEPPGIGAFDPEKDTIKRHAYY) are cytoplasmic. A helical transmembrane segment spans residues 113 to 133 (QWVPFVLFFQALCFYIPHALW). The Extracellular segment spans residues 134–283 (KSWEGGRIKA…VMALNIMNEK (150 aa)). The helical transmembrane segment at 284–304 (IYIILWFWYAFLLIVTVLGLL) threads the bilayer. Over 305-438 (WRILTLCFYR…STSDMAKLPV (134 aa)) the chain is Cytoplasmic. Disordered regions lie at residues 381–402 (NDVN…PELS) and 415–438 (RRNG…KLPV). The span at 418 to 431 (GSPSAGGAQGPSTS) shows a compositional bias: low complexity.

Belongs to the pannexin family. Expressed around gut lobes in embryonic stages 15-17.

The protein localises to the cell membrane. It is found in the cell junction. The protein resides in the gap junction. Structural components of the gap junctions. This chain is Innexin inx7 (Inx7), found in Drosophila melanogaster (Fruit fly).